Reading from the N-terminus, the 288-residue chain is MDERAALELVGGLVSRAGDDAAVVGDTALTIDMLHDATDFPSGTTRYTAGWRSVGASLSDVAATGATATAAVAAYGAPGFDDDELAAFVTGARDVCTAVGAEYVGGDLDGHSEFTVATAAIGDADHRVTRSGARPGDSVVVTGSLGRSAAAMALFDAGDTERANDLFQFMPRVAAGRVLGAHATAMMDASDGLARSLHQLAAASDCGMAVDSGRLPVADALAEVTADPVERAVSFGGDFELVAAVPPERVEAARAAVPGSLSVVGRVTAAADGVRLDGDALADDGWTH.

3 residues coordinate Mg(2+): aspartate 20, threonine 30, and aspartate 32. Aspartate 39 contacts substrate. Aspartate 60 and aspartate 107 together coordinate Mg(2+). Residues 106–107 and arginine 130 each bind ATP; that span reads GD. Aspartate 188 provides a ligand contact to Mg(2+). Serine 190 is an ATP binding site. Aspartate 191 contacts Mg(2+). Tryptophan 286 is a substrate binding site.

Belongs to the thiamine-monophosphate kinase family.

The enzyme catalyses thiamine phosphate + ATP = thiamine diphosphate + ADP. It functions in the pathway cofactor biosynthesis; thiamine diphosphate biosynthesis; thiamine diphosphate from thiamine phosphate: step 1/1. In terms of biological role, catalyzes the ATP-dependent phosphorylation of thiamine-monophosphate (TMP) to form thiamine-pyrophosphate (TPP), the active form of vitamin B1. The chain is Thiamine-monophosphate kinase from Halobacterium salinarum (strain ATCC 700922 / JCM 11081 / NRC-1) (Halobacterium halobium).